Here is a 388-residue protein sequence, read N- to C-terminus: MKIFLCLIAVVSLQGVLAYDIEREYAWKNISFEGIDPASYSVKNSIVTGFAHDADSKKIFITIPRLNPVPITLTELDTTKHPEGSPPLSKFPGSDKLISVYQPVIDECRRLWIVDAGQVEYKGDEQKIPKKNAAIIAYDLTKDNYPEIDRYEIPNNVAGNPLGFGGFAVDVTNPKEGCGKTFVYITNFEDNTLIVYDQEKKDSWKISHDSFKPEHESILTHNGAQHILKLGIFGITLGDLDEEGNRQAYYLGGSSTKLFRVNTKDLKKKAGQIEFTPLGDRGSHSEALALAYDPKTKVIFFIEYNSKRISCWNTQKSLNPDNIDVIYHSPDFIFGTDISMDSESKLWFFSNGHPPIENVQLTFDKPHFRLISMDTKKSIHGTKCEVKP.

A signal peptide spans 1 to 18 (MKIFLCLIAVVSLQGVLA). An N-linked (GlcNAc...) asparagine glycan is attached at asparagine 29.

This sequence belongs to the major royal jelly protein family. Female salivary gland (at protein level).

The protein localises to the secreted. Probably modulates blood feeding of sand flies on vertebrate species by binding and sequestering different mediators involved in the host response. Binds biogenic amines. Binds noradrenaline with medium affinity. Binds octopamine with low affinity. Poorly binds histamine, adrenaline and serotonin. The protein is Yellow-related salivary protein SP03 of Phlebotomus perniciosus (Phlebotomine sand fly).